The primary structure comprises 64 residues: uncharacterized protein (64 aa).

To P.abyssi PAB3148.

This is an uncharacterized protein from Archaeoglobus fulgidus (strain ATCC 49558 / DSM 4304 / JCM 9628 / NBRC 100126 / VC-16).